The chain runs to 380 residues: Succinyl-diaminopimelate desuccinylase (380 aa).

A Zn(2+)-binding site is contributed by histidine 71. Aspartate 73 is a catalytic residue. Aspartate 104 provides a ligand contact to Zn(2+). Catalysis depends on glutamate 136, which acts as the Proton acceptor. 3 residues coordinate Zn(2+): glutamate 137, glutamate 166, and histidine 351.

It belongs to the peptidase M20A family. DapE subfamily. In terms of assembly, homodimer. Zn(2+) serves as cofactor. It depends on Co(2+) as a cofactor.

The catalysed reaction is N-succinyl-(2S,6S)-2,6-diaminopimelate + H2O = (2S,6S)-2,6-diaminopimelate + succinate. The protein operates within amino-acid biosynthesis; L-lysine biosynthesis via DAP pathway; LL-2,6-diaminopimelate from (S)-tetrahydrodipicolinate (succinylase route): step 3/3. Its function is as follows. Catalyzes the hydrolysis of N-succinyl-L,L-diaminopimelic acid (SDAP), forming succinate and LL-2,6-diaminopimelate (DAP), an intermediate involved in the bacterial biosynthesis of lysine and meso-diaminopimelic acid, an essential component of bacterial cell walls. This chain is Succinyl-diaminopimelate desuccinylase, found in Ehrlichia canis (strain Jake).